The chain runs to 753 residues: ATPase family gene 2 protein homolog B (753 aa).

An N-acetylmethionine modification is found at Met-1. Residues 1–189 (MAPDSDPFPE…PRTRVSLGGE (189 aa)) form a required for interaction with AFG2A and CINP region. The disordered stretch occupies residues 171–203 (SPDPAGLVTPRTRVSLGGEPPSEAQPQPEVPLG). Residues 241–248 (GPPGVGKT) and 505–512 (GPPGCAKT) each bind ATP.

The protein belongs to the AAA ATPase family. AFG2 subfamily. In terms of assembly, part of the 55LCC heterohexameric ATPase complex composed at least of AIRIM, AFG2A, AFG2B and CINP. Associates with pre-60S ribosomal particles. In terms of tissue distribution, expressed in both neurons and glia during embryonic and adult stages of brain development.

It localises to the cytoplasm. It is found in the cytoskeleton. The protein resides in the spindle. The protein localises to the nucleus. It catalyses the reaction ATP + H2O = ADP + phosphate + H(+). In the context of 55LCC heterohexameric ATPase complex, the ATPase activity is stimulated by DNA binding and inhibited in presence of RNA. Functionally, ATP-dependent chaperone part of the 55LCC heterohexameric ATPase complex which is chromatin-associated and promotes replisome proteostasis to maintain replication fork progression and genome stability. Required for replication fork progression, sister chromatid cohesion, and chromosome stability. The ATPase activity is specifically enhanced by replication fork DNA and is coupled to cysteine protease-dependent cleavage of replisome substrates in response to replication fork damage. Uses ATPase activity to process replisome substrates in S-phase, facilitating their proteolytic turnover from chromatin to ensure DNA replication and mitotic fidelity. Plays an essential role in the cytoplasmic maturation steps of pre-60S ribosomal particles by promoting the release of shuttling protein RSL24D1/RLP24 from the pre-ribosomal particles. The polypeptide is ATPase family gene 2 protein homolog B (Homo sapiens (Human)).